A 58-amino-acid chain; its full sequence is UPF0391 membrane protein COXBURSA331_A2131 (58 aa).

2 helical membrane passes run 3 to 23 (FWVL…FTGI) and 30 to 50 (IAKI…IAML).

It belongs to the UPF0391 family.

It is found in the cell membrane. The protein is UPF0391 membrane protein COXBURSA331_A2131 of Coxiella burnetii (strain RSA 331 / Henzerling II).